The following is a 94-amino-acid chain: U1-theraphotoxin-Sp1a (94 aa).

Positions 1 to 22 (MIFLLPSIISVMLLAEPVLMLG) are cleaved as a signal peptide. Residues 23–58 (DTEDADLMEMVQLSRPFFNPIIRAVELVELREERQR) constitute a propeptide that is removed on maturation. Intrachain disulfides connect C60–C78, C67–C83, and C77–C88. Residue V92 is modified to Valine amide.

Belongs to the neurotoxin 14 (magi-1) family. OAIP-1 subfamily. Expressed by the venom gland.

The protein resides in the secreted. Its function is as follows. Probable ion channel inhibitor. Shows insecticidal activity. Acts synergistically with the neonicotinoid insecticide imidacloprid. Is neither a repellent that repels insects nor an attractant that is preferentially consumed by insects. Is very stable. In Selenotypus plumipes (Australian featherleg tarantula), this protein is U1-theraphotoxin-Sp1a.